The sequence spans 289 residues: Ribosomal RNA small subunit methyltransferase A (289 aa).

S-adenosyl-L-methionine contacts are provided by His27, Leu29, Gly54, Glu76, Asp102, and Asn123.

Belongs to the class I-like SAM-binding methyltransferase superfamily. rRNA adenine N(6)-methyltransferase family. RsmA subfamily.

The protein resides in the cytoplasm. It carries out the reaction adenosine(1518)/adenosine(1519) in 16S rRNA + 4 S-adenosyl-L-methionine = N(6)-dimethyladenosine(1518)/N(6)-dimethyladenosine(1519) in 16S rRNA + 4 S-adenosyl-L-homocysteine + 4 H(+). Functionally, specifically dimethylates two adjacent adenosines (A1518 and A1519) in the loop of a conserved hairpin near the 3'-end of 16S rRNA in the 30S particle. May play a critical role in biogenesis of 30S subunits. This Maricaulis maris (strain MCS10) (Caulobacter maris) protein is Ribosomal RNA small subunit methyltransferase A.